Consider the following 459-residue polypeptide: Sorting nexin-8 (459 aa).

Positions 1–53 (MTGGAMDPLPTAPGAAAAEAEVDEEADPPAADSPVPPVSEPRAPDAGQMQVPP) are disordered. One can recognise a PX domain in the interval 68 to 176 (ARDAVQVELV…KLFLSFSGPD (109 aa)). Residues R104, K130, and R143 each coordinate a 1,2-diacyl-sn-glycero-3-phospho-(1D-myo-inositol-3-phosphate).

Belongs to the sorting nexin family.

The protein resides in the early endosome membrane. Functionally, may be involved in several stages of intracellular trafficking. May play a role in intracellular protein transport from early endosomes to the trans-Golgi network. This chain is Sorting nexin-8 (SNX8), found in Bos taurus (Bovine).